Reading from the N-terminus, the 373-residue chain is Peptide chain release factor 2 (373 aa).

Q252 carries the N5-methylglutamine modification.

Belongs to the prokaryotic/mitochondrial release factor family. Methylated by PrmC. Methylation increases the termination efficiency of RF2.

It localises to the cytoplasm. Peptide chain release factor 2 directs the termination of translation in response to the peptide chain termination codons UGA and UAA. The sequence is that of Peptide chain release factor 2 from Staphylococcus saprophyticus subsp. saprophyticus (strain ATCC 15305 / DSM 20229 / NCIMB 8711 / NCTC 7292 / S-41).